Consider the following 721-residue polypeptide: Protein mu-NS (721 aa).

The interval M1–P13 is interaction with sigma-NS. Residues M1 to S38 form an RNA-binding region. The tract at residues V14–D40 is interaction with mu-2. The involved in the formation of factory-like inclusions stretch occupies residues S471–L721. Coiled coils occupy residues L523 to A560 and Q628 to Q686.

The protein belongs to the orthoreovirus mu-NS protein family. Interacts with mu-2. Interacts with sigma-NS; in viral factories. Interacts with the inner capsid proteins lambda-1 and sigma-2, and outer capsid protein lambda-2; in viral factories. Post-translationally, the N-terminus is blocked.

The protein localises to the host cytoplasm. In terms of biological role, non-structural protein implicated with protein sigma-NS in forming the matrix of viral factories, which are large inclusions in the host cytoplasm where replication intermediates are assembled and viral RNA replication takes place. Together with mu-2, recruits the other core proteins to these factories. The protein is Protein mu-NS (M3) of Mammalia (T1L).